We begin with the raw amino-acid sequence, 473 residues long: Tubulin gamma chain (473 aa).

Positions 33–56 (TDGLSQLPDSSTERDDDTKPFFRE) are disordered. Positions 43–56 (STERDDDTKPFFRE) are enriched in basic and acidic residues. 143-149 (AGGTGSG) provides a ligand contact to GTP.

It belongs to the tubulin family. As to quaternary structure, interacts with SPC72, SPC97 and SPC98.

The protein resides in the cytoplasm. It localises to the cytoskeleton. Its subcellular location is the microtubule organizing center. The protein localises to the spindle pole body. Functionally, tubulin is the major constituent of microtubules. The gamma chain is found at microtubule organizing centers (MTOC) such as the spindle poles or the centrosome, suggesting that it is involved in the minus-end nucleation of microtubule assembly. TUB4 is an important spindle pole body component that organizes both cytoplasmic and nuclear microtubule arrays. This is Tubulin gamma chain (TUB4) from Saccharomyces cerevisiae (strain ATCC 204508 / S288c) (Baker's yeast).